The sequence spans 275 residues: Dermonecrotic toxin SpeSicTox-betaIIA2iii (275 aa).

The active site involves His-5. Mg(2+)-binding residues include Glu-25 and Asp-27. The active-site Nucleophile is His-41. 2 disulfides stabilise this stretch: Cys-45-Cys-51 and Cys-47-Cys-190. A Mg(2+)-binding site is contributed by Asp-85.

This sequence belongs to the arthropod phospholipase D family. Class II subfamily. It depends on Mg(2+) as a cofactor. Expressed by the venom gland.

Its subcellular location is the secreted. It catalyses the reaction an N-(acyl)-sphingosylphosphocholine = an N-(acyl)-sphingosyl-1,3-cyclic phosphate + choline. The enzyme catalyses an N-(acyl)-sphingosylphosphoethanolamine = an N-(acyl)-sphingosyl-1,3-cyclic phosphate + ethanolamine. It carries out the reaction a 1-acyl-sn-glycero-3-phosphocholine = a 1-acyl-sn-glycero-2,3-cyclic phosphate + choline. The catalysed reaction is a 1-acyl-sn-glycero-3-phosphoethanolamine = a 1-acyl-sn-glycero-2,3-cyclic phosphate + ethanolamine. In terms of biological role, dermonecrotic toxins cleave the phosphodiester linkage between the phosphate and headgroup of certain phospholipids (sphingolipid and lysolipid substrates), forming an alcohol (often choline) and a cyclic phosphate. This toxin acts on sphingomyelin (SM). It may also act on ceramide phosphoethanolamine (CPE), lysophosphatidylcholine (LPC) and lysophosphatidylethanolamine (LPE), but not on lysophosphatidylserine (LPS), and lysophosphatidylglycerol (LPG). It acts by transphosphatidylation, releasing exclusively cyclic phosphate products as second products. Induces dermonecrosis, hemolysis, increased vascular permeability, edema, inflammatory response, and platelet aggregation. The sequence is that of Dermonecrotic toxin SpeSicTox-betaIIA2iii from Sicarius peruensis (Six-eyed sand spider).